The primary structure comprises 276 residues: 3,4-dihydroxyphenylacetate 2,3-dioxygenase (276 aa).

It depends on Fe cation as a cofactor.

It carries out the reaction 3,4-dihydroxyphenylacetate + O2 = 2-hydroxy-5-carboxymethylmuconate semialdehyde + H(+). Its pathway is aromatic compound metabolism; 4-hydroxyphenylacetate degradation; pyruvate and succinate semialdehyde from 4-hydroxyphenylacetate: step 2/7. Transforms homoprotocatechuic acid (HPC) into 5-carboxymethyl-2-hydroxy-muconic semialdehyde (CHMS). The sequence is that of 3,4-dihydroxyphenylacetate 2,3-dioxygenase (hpcB) from Escherichia coli.